Reading from the N-terminus, the 267-residue chain is 4-hydroxy-tetrahydrodipicolinate reductase (267 aa).

NAD(+) is bound by residues 8–13 and D34; that span reads GAAGRM. R35 provides a ligand contact to NADP(+). NAD(+)-binding positions include 98–100 and 122–125; these read GTT and AANF. Catalysis depends on H155, which acts as the Proton donor/acceptor. A (S)-2,3,4,5-tetrahydrodipicolinate-binding site is contributed by H156. The Proton donor role is filled by K159. 165-166 is a (S)-2,3,4,5-tetrahydrodipicolinate binding site; sequence GT.

Belongs to the DapB family.

It localises to the cytoplasm. The enzyme catalyses (S)-2,3,4,5-tetrahydrodipicolinate + NAD(+) + H2O = (2S,4S)-4-hydroxy-2,3,4,5-tetrahydrodipicolinate + NADH + H(+). The catalysed reaction is (S)-2,3,4,5-tetrahydrodipicolinate + NADP(+) + H2O = (2S,4S)-4-hydroxy-2,3,4,5-tetrahydrodipicolinate + NADPH + H(+). It functions in the pathway amino-acid biosynthesis; L-lysine biosynthesis via DAP pathway; (S)-tetrahydrodipicolinate from L-aspartate: step 4/4. Its function is as follows. Catalyzes the conversion of 4-hydroxy-tetrahydrodipicolinate (HTPA) to tetrahydrodipicolinate. The protein is 4-hydroxy-tetrahydrodipicolinate reductase of Pseudomonas putida (strain ATCC 47054 / DSM 6125 / CFBP 8728 / NCIMB 11950 / KT2440).